The sequence spans 646 residues: Galactofuranosyltransferase GlfT2 (646 aa).

The UDP-alpha-D-galactofuranose site is built by Arg182, Gln211, Asn240, and Asp267. Residues Asp267 and Asp269 each coordinate Mn(2+). Asp384 (proton acceptor) is an active-site residue. Residue His408 coordinates Mn(2+).

It belongs to the glycosyltransferase 2 family. Homotetramer. Requires Mn(2+) as cofactor. Mg(2+) is required as a cofactor.

Its subcellular location is the cell membrane. The catalysed reaction is beta-D-galactofuranosyl-(1-&gt;5)-beta-D-galactofuranosyl-(1-&gt;4)-alpha-L-rhamnosyl-(1-&gt;3)-N-acetyl-alpha-D-glucosaminyl-diphospho-trans,octa-cis-decaprenol + 28 UDP-alpha-D-galactofuranose = [beta-D-galactofuranosyl-(1-&gt;5)-beta-D-galactofuranosyl-(1-&gt;6)]14-beta-D-galactofuranosyl-(1-&gt;5)-beta-D-galactofuranosyl-(1-&gt;4)-alpha-L-rhamnopyranosyl-(1-&gt;3)-N-acetyl-alpha-D-glucosaminyl-diphospho-trans,octa-cis-decaprenol + 28 UDP + 28 H(+). It functions in the pathway cell wall biogenesis; cell wall polysaccharide biosynthesis. Its function is as follows. Involved in the galactan polymerization of the arabinogalactan (AG) region of the mycolylarabinogalactan-peptidoglycan (mAGP) complex, an essential component of the mycobacteria cell wall. Thus, successively transfers approximately 28 galactofuranosyl (Galf) residues from UDP-galactofuranose (UDP-Galf) onto the galactofuranosyl-galactofuranosyl-rhamnosyl-GlcNAc-diphospho-decaprenol (Galf-Galf-Rha-GlcNAc-PP-C50) acceptor produced by GlfT1, with alternating 1-&gt;5 and 1-&gt;6 links, forming a galactan domain with approximately 30 galactofuranosyl residues. The sequence is that of Galactofuranosyltransferase GlfT2 from Mycolicibacterium smegmatis (strain ATCC 700084 / mc(2)155) (Mycobacterium smegmatis).